The sequence spans 123 residues: Small ribosomal subunit protein uS12 (123 aa).

At Asp89 the chain carries 3-methylthioaspartic acid.

This sequence belongs to the universal ribosomal protein uS12 family. Part of the 30S ribosomal subunit. Contacts proteins S8 and S17. May interact with IF1 in the 30S initiation complex.

Functionally, with S4 and S5 plays an important role in translational accuracy. In terms of biological role, interacts with and stabilizes bases of the 16S rRNA that are involved in tRNA selection in the A site and with the mRNA backbone. Located at the interface of the 30S and 50S subunits, it traverses the body of the 30S subunit contacting proteins on the other side and probably holding the rRNA structure together. The combined cluster of proteins S8, S12 and S17 appears to hold together the shoulder and platform of the 30S subunit. The sequence is that of Small ribosomal subunit protein uS12 from Brucella abortus (strain S19).